A 402-amino-acid polypeptide reads, in one-letter code: NADH-quinone oxidoreductase subunit D (402 aa).

Belongs to the complex I 49 kDa subunit family. As to quaternary structure, NDH-1 is composed of 14 different subunits. Subunits NuoB, C, D, E, F, and G constitute the peripheral sector of the complex.

The protein resides in the cell inner membrane. It carries out the reaction a quinone + NADH + 5 H(+)(in) = a quinol + NAD(+) + 4 H(+)(out). Its function is as follows. NDH-1 shuttles electrons from NADH, via FMN and iron-sulfur (Fe-S) centers, to quinones in the respiratory chain. The immediate electron acceptor for the enzyme in this species is believed to be ubiquinone. Couples the redox reaction to proton translocation (for every two electrons transferred, four hydrogen ions are translocated across the cytoplasmic membrane), and thus conserves the redox energy in a proton gradient. The protein is NADH-quinone oxidoreductase subunit D of Maricaulis maris (strain MCS10) (Caulobacter maris).